Reading from the N-terminus, the 413-residue chain is Arginine biosynthesis bifunctional protein ArgJ (413 aa).

The substrate site is built by T163, K189, T200, E286, N408, and T413. T200 serves as the catalytic Nucleophile.

It belongs to the ArgJ family. In terms of assembly, heterotetramer of two alpha and two beta chains.

The protein localises to the cytoplasm. It catalyses the reaction N(2)-acetyl-L-ornithine + L-glutamate = N-acetyl-L-glutamate + L-ornithine. The catalysed reaction is L-glutamate + acetyl-CoA = N-acetyl-L-glutamate + CoA + H(+). It participates in amino-acid biosynthesis; L-arginine biosynthesis; L-ornithine and N-acetyl-L-glutamate from L-glutamate and N(2)-acetyl-L-ornithine (cyclic): step 1/1. Its pathway is amino-acid biosynthesis; L-arginine biosynthesis; N(2)-acetyl-L-ornithine from L-glutamate: step 1/4. Functionally, catalyzes two activities which are involved in the cyclic version of arginine biosynthesis: the synthesis of N-acetylglutamate from glutamate and acetyl-CoA as the acetyl donor, and of ornithine by transacetylation between N(2)-acetylornithine and glutamate. This Staphylococcus aureus (strain COL) protein is Arginine biosynthesis bifunctional protein ArgJ.